We begin with the raw amino-acid sequence, 162 residues long: Auxin-responsive protein SAUR36 (162 aa).

Belongs to the ARG7 family. In terms of tissue distribution, expressed in embryo, endosperm, growing hypocotyls and shoot apical meristems.

Functionally, acts a positive regulator of leaf senescence and may mediate auxin-induced leaf senescence. Plays a role in the regulation of seed germination by gibberellins and abscisic acid (ABA). Plays a role in the regulation of light-dependent hypocotyl elongation. The chain is Auxin-responsive protein SAUR36 from Arabidopsis thaliana (Mouse-ear cress).